We begin with the raw amino-acid sequence, 241 residues long: ATP synthase subunit a (241 aa).

5 helical membrane passes run 30–50 (GQVF…ISLG), 91–111 (FIGT…LIPW), 128–148 (INTT…AGLS), 193–213 (LVVG…VMFL), and 214–234 (GLFT…YYIG).

Belongs to the ATPase A chain family. As to quaternary structure, F-type ATPases have 2 components, CF(1) - the catalytic core - and CF(0) - the membrane proton channel. CF(1) has five subunits: alpha(3), beta(3), gamma(1), delta(1), epsilon(1). CF(0) has four main subunits: a, b, b' and c.

It localises to the cellular thylakoid membrane. Its function is as follows. Key component of the proton channel; it plays a direct role in the translocation of protons across the membrane. In Prochlorococcus marinus (strain MIT 9515), this protein is ATP synthase subunit a.